The primary structure comprises 435 residues: 3-phosphoshikimate 1-carboxyvinyltransferase (435 aa).

3-phosphoshikimate-binding residues include K25, S26, and R30. K25 is a binding site for phosphoenolpyruvate. Residues G99 and R130 each coordinate phosphoenolpyruvate. Residues S176, S177, Q178, S204, D319, N342, and K346 each contribute to the 3-phosphoshikimate site. Phosphoenolpyruvate is bound at residue Q178. D319 acts as the Proton acceptor in catalysis. Phosphoenolpyruvate is bound by residues R350, R394, and K419.

It belongs to the EPSP synthase family. In terms of assembly, monomer.

The protein resides in the cytoplasm. The enzyme catalyses 3-phosphoshikimate + phosphoenolpyruvate = 5-O-(1-carboxyvinyl)-3-phosphoshikimate + phosphate. Its pathway is metabolic intermediate biosynthesis; chorismate biosynthesis; chorismate from D-erythrose 4-phosphate and phosphoenolpyruvate: step 6/7. Its function is as follows. Catalyzes the transfer of the enolpyruvyl moiety of phosphoenolpyruvate (PEP) to the 5-hydroxyl of shikimate-3-phosphate (S3P) to produce enolpyruvyl shikimate-3-phosphate and inorganic phosphate. In Haemophilus ducreyi (strain 35000HP / ATCC 700724), this protein is 3-phosphoshikimate 1-carboxyvinyltransferase.